The sequence spans 108 residues: uncharacterized protein (108 aa).

The HTH hxlR-type domain occupies 7–106 (CPRFEKAVDI…WATEWIDPSF (100 aa)).

This is an uncharacterized protein from Bacillus subtilis (strain 168).